The chain runs to 222 residues: Pyrrolidone-carboxylate peptidase (222 aa).

Active-site residues include Glu80, Cys146, and His170.

This sequence belongs to the peptidase C15 family. Homotetramer.

Its subcellular location is the cytoplasm. The catalysed reaction is Release of an N-terminal pyroglutamyl group from a polypeptide, the second amino acid generally not being Pro.. In terms of biological role, removes 5-oxoproline from various penultimate amino acid residues except L-proline. In Mycobacterium tuberculosis (strain ATCC 25177 / H37Ra), this protein is Pyrrolidone-carboxylate peptidase.